The sequence spans 477 residues: Ectonucleotide pyrophosphatase/phosphodiesterase family member 5 (477 aa).

The first 24 residues, 1–24, serve as a signal peptide directing secretion; the sequence is MTSKFLLVSFILAALSLSTTFSLQ. Residues D36 and T72 each contribute to the Zn(2+) site. The active-site Nucleophile is the T72. 2 N-linked (GlcNAc...) asparagine glycosylation sites follow: N101 and N158. D191, H195, D238, and H239 together coordinate Zn(2+). 2 N-linked (GlcNAc...) asparagine glycosylation sites follow: N292 and N329. H339 contacts Zn(2+). Residues N362, N369, N382, and N389 are each glycosylated (N-linked (GlcNAc...) asparagine). A helical transmembrane segment spans residues 432 to 452; sequence PYFIGVSLGSIIVIVFFVIFI.

This sequence belongs to the nucleotide pyrophosphatase/phosphodiesterase family. Requires Zn(2+) as cofactor. In terms of processing, N-glycosylated.

It is found in the secreted. Its subcellular location is the membrane. Can hydrolyze NAD but cannot hydrolyze nucleotide di- and triphosphates. Lacks lysopholipase D activity. May play a role in neuronal cell communication. The sequence is that of Ectonucleotide pyrophosphatase/phosphodiesterase family member 5 from Homo sapiens (Human).